Reading from the N-terminus, the 159-residue chain is Cytochrome c-type biogenesis protein CcmE (159 aa).

Topologically, residues 1 to 8 (MNIRRKNR) are cytoplasmic. A helical; Signal-anchor for type II membrane protein transmembrane segment spans residues 9 to 29 (LWIACAVLAGLALTIGLVLYA). Topologically, residues 30–159 (LRSNIDLFYT…PASVYKDPAS (130 aa)) are periplasmic. Heme contacts are provided by His130 and Tyr134. Residues 132–147 (ENYTPPEVEKAMEANH) are compositionally biased toward basic and acidic residues. The interval 132–159 (ENYTPPEVEKAMEANHRRPASVYKDPAS) is disordered.

The protein belongs to the CcmE/CycJ family.

The protein resides in the cell inner membrane. Functionally, heme chaperone required for the biogenesis of c-type cytochromes. Transiently binds heme delivered by CcmC and transfers the heme to apo-cytochromes in a process facilitated by CcmF and CcmH. The protein is Cytochrome c-type biogenesis protein CcmE of Escherichia coli (strain 55989 / EAEC).